Consider the following 163-residue polypeptide: Epithelial membrane protein 3 (163 aa).

Residues 4-24 (LLLVVSALHILILILLFVATL) form a helical membrane-spanning segment. N-linked (GlcNAc...) asparagine glycosylation is found at Asn-49 and Asn-56. 3 helical membrane-spanning segments follow: residues 66–86 (VQVLMVLSLILCCLSFILFMF), 100–120 (TGFCQLCTSVAVFTGALIYAI), and 139–159 (FALAWVAFPLALASGIIYIHL).

The protein belongs to the PMP-22/EMP/MP20 family.

Its subcellular location is the membrane. Functionally, probably involved in cell proliferation and cell-cell interactions. In Bos taurus (Bovine), this protein is Epithelial membrane protein 3 (EMP3).